The chain runs to 187 residues: GMP synthase [glutamine-hydrolyzing] subunit A (187 aa).

Residues 1-187 form the Glutamine amidotransferase type-1 domain; the sequence is MILIIDNHGQ…KNFAKLCGEL (187 aa). Cysteine 76 (nucleophile) is an active-site residue. Residues histidine 164 and glutamate 166 contribute to the active site.

In terms of assembly, heterodimer composed of a glutamine amidotransferase subunit (A) and a GMP-binding subunit (B).

The catalysed reaction is XMP + L-glutamine + ATP + H2O = GMP + L-glutamate + AMP + diphosphate + 2 H(+). It functions in the pathway purine metabolism; GMP biosynthesis; GMP from XMP (L-Gln route): step 1/1. In terms of biological role, catalyzes the synthesis of GMP from XMP. The chain is GMP synthase [glutamine-hydrolyzing] subunit A from Methanopyrus kandleri (strain AV19 / DSM 6324 / JCM 9639 / NBRC 100938).